A 157-amino-acid chain; its full sequence is UPF0251 protein CLK_0815 (157 aa).

It belongs to the UPF0251 family.

The protein is UPF0251 protein CLK_0815 of Clostridium botulinum (strain Loch Maree / Type A3).